The following is a 223-amino-acid chain: Noggin-3 (223 aa).

The first 23 residues, 1-23, serve as a signal peptide directing secretion; that stretch reads MDNIPYFLATVLIFSLGFRIEEG. N-linked (GlcNAc...) asparagine glycosylation is found at asparagine 60 and asparagine 93.

Belongs to the noggin family. Homodimer; disulfide-linked.

It is found in the secreted. In terms of biological role, may function as an inhibitor of bone morphogenetic proteins (BMP) signaling during later stages of development including late phases of dorsoventral patterning, to refine the early pattern set up by the interaction of chordino and BMP2/4. Not involved in organizer function or early phases of dorsoventral pattern formation. The protein is Noggin-3 (nog3) of Danio rerio (Zebrafish).